We begin with the raw amino-acid sequence, 167 residues long: Biotin carboxyl carrier protein of acetyl-CoA carboxylase (167 aa).

The disordered stretch occupies residues Ser53–Ser91. Basic and acidic residues predominate over residues Asp64 to Thr74. Positions Thr75–Ser86 are enriched in low complexity. Residues Gly87–Ala163 form the Biotinyl-binding domain. At Lys129 the chain carries N6-biotinyllysine.

As to quaternary structure, homodimer.

Its pathway is lipid metabolism; fatty acid biosynthesis. This protein is a component of the acetyl coenzyme A carboxylase complex; first, biotin carboxylase catalyzes the carboxylation of the carrier protein and then the transcarboxylase transfers the carboxyl group to form malonyl-CoA. The sequence is that of Biotin carboxyl carrier protein of acetyl-CoA carboxylase (accB) from Chlamydia pneumoniae (Chlamydophila pneumoniae).